A 268-amino-acid polypeptide reads, in one-letter code: Mediator of RNA polymerase II transcription subunit 8 (268 aa).

Residues 1-28 (MQREEKQLEASLDALLSQVADLKNSLGS) are a coiled coil. Ser82 bears the Phosphoserine mark. Residues 133-163 (ADAAQKQIQSLNKMCSNLLEKISKEERESES) adopt a coiled-coil conformation. Positions 142-151 (SLNKMCSNLL) are interaction with the Elongin BC complex. 2 disordered regions span residues 156-176 (KEERESESGGLRPNKQTFNPT) and 193-268 (NWRP…PYQR). The span at 200–209 (SGPGQAGQPG) shows a compositional bias: gly residues. Over residues 218 to 235 (SGLQQVQMAGAPSQQQPM) the composition is skewed to polar residues.

This sequence belongs to the Mediator complex subunit 8 family. In terms of assembly, component of the Mediator complex, which is composed of MED1, MED4, MED6, MED7, MED8, MED9, MED10, MED11, MED12, MED13, MED13L, MED14, MED15, MED16, MED17, MED18, MED19, MED20, MED21, MED22, MED23, MED24, MED25, MED26, MED27, MED29, MED30, MED31, CCNC, CDK8 and CDC2L6/CDK11. The MED12, MED13, CCNC and CDK8 subunits form a distinct module termed the CDK8 module. Mediator containing the CDK8 module is less active than Mediator lacking this module in supporting transcriptional activation. Individual preparations of the Mediator complex lacking one or more distinct subunits have been variously termed ARC, CRSP, DRIP, PC2, SMCC and TRAP. May be part of a multisubunit E3 ubiquitin-protein ligase complex with the elongin BC complex (ELOB and ELOC), CUL2 and RBX1.

The protein resides in the nucleus. The protein operates within protein modification; protein ubiquitination. Functionally, component of the Mediator complex, a coactivator involved in the regulated transcription of nearly all RNA polymerase II-dependent genes. Mediator functions as a bridge to convey information from gene-specific regulatory proteins to the basal RNA polymerase II transcription machinery. Mediator is recruited to promoters by direct interactions with regulatory proteins and serves as a scaffold for the assembly of a functional preinitiation complex with RNA polymerase II and the general transcription factors. May play a role as a target recruitment subunit in E3 ubiquitin-protein ligase complexes and thus in ubiquitination and subsequent proteasomal degradation of target proteins. The chain is Mediator of RNA polymerase II transcription subunit 8 (MED8) from Homo sapiens (Human).